A 102-amino-acid chain; its full sequence is Putative pterin-4-alpha-carbinolamine dehydratase (102 aa).

It belongs to the pterin-4-alpha-carbinolamine dehydratase family.

It catalyses the reaction (4aS,6R)-4a-hydroxy-L-erythro-5,6,7,8-tetrahydrobiopterin = (6R)-L-erythro-6,7-dihydrobiopterin + H2O. In Burkholderia ambifaria (strain ATCC BAA-244 / DSM 16087 / CCUG 44356 / LMG 19182 / AMMD) (Burkholderia cepacia (strain AMMD)), this protein is Putative pterin-4-alpha-carbinolamine dehydratase.